The following is a 178-amino-acid chain: Large ribosomal subunit protein uL5 (178 aa).

The protein belongs to the universal ribosomal protein uL5 family. In terms of assembly, part of the 50S ribosomal subunit; part of the 5S rRNA/L5/L18/L25 subcomplex. Contacts the 5S rRNA and the P site tRNA. Forms a bridge to the 30S subunit in the 70S ribosome.

This is one of the proteins that bind and probably mediate the attachment of the 5S RNA into the large ribosomal subunit, where it forms part of the central protuberance. In the 70S ribosome it contacts protein S13 of the 30S subunit (bridge B1b), connecting the 2 subunits; this bridge is implicated in subunit movement. Contacts the P site tRNA; the 5S rRNA and some of its associated proteins might help stabilize positioning of ribosome-bound tRNAs. The chain is Large ribosomal subunit protein uL5 from Acinetobacter baylyi (strain ATCC 33305 / BD413 / ADP1).